The following is a 735-amino-acid chain: DNA replication licensing factor mcm5 (735 aa).

Residues 332–538 (IYETVAKSIA…RDMTLAKHVM (207 aa)) enclose the MCM domain. Residue arginine 372 participates in ADP binding. The short motif at 513–516 (SRFD) is the Arginine finger element.

The protein belongs to the MCM family. In terms of assembly, component of the mcm2-7 complex (RLF-M). The complex forms a toroidal hexameric ring with the proposed subunit order mcm2-mcm6-mcm4-mcm7-mcm3-mcm5. The heterodimer of mmcm3/mcm5 interacts with mcm4, mmcm6, mcm7 and weakly with mcm2. Component of the CMG helicase complex, composed of the mcm2-7 complex, the GINS complex and cdc45.

It is found in the nucleus. The protein localises to the chromosome. The enzyme catalyses ATP + H2O = ADP + phosphate + H(+). Acts as a component of the MCM2-7 complex (MCM complex) which is the replicative helicase essential for 'once per cell cycle' DNA replication initiation and elongation in eukaryotic cells. Core component of CDC45-MCM-GINS (CMG) helicase, the molecular machine that unwinds template DNA during replication, and around which the replisome is built. The active ATPase sites in the MCM2-7 ring are formed through the interaction surfaces of two neighboring subunits such that a critical structure of a conserved arginine finger motif is provided in trans relative to the ATP-binding site of the Walker A box of the adjacent subunit. The six ATPase active sites, however, are likely to contribute differentially to the complex helicase activity. The protein is DNA replication licensing factor mcm5 of Xenopus tropicalis (Western clawed frog).